We begin with the raw amino-acid sequence, 247 residues long: Carboxy-S-adenosyl-L-methionine synthase (247 aa).

S-adenosyl-L-methionine-binding positions include Tyr39, Gly64 to Ser66, Asp89 to Asn90, Asp117 to Ile118, Asn132, and Arg199.

This sequence belongs to the class I-like SAM-binding methyltransferase superfamily. Cx-SAM synthase family. As to quaternary structure, homodimer.

It catalyses the reaction prephenate + S-adenosyl-L-methionine = carboxy-S-adenosyl-L-methionine + 3-phenylpyruvate + H2O. Its function is as follows. Catalyzes the conversion of S-adenosyl-L-methionine (SAM) to carboxy-S-adenosyl-L-methionine (Cx-SAM). The sequence is that of Carboxy-S-adenosyl-L-methionine synthase from Salmonella choleraesuis (strain SC-B67).